Reading from the N-terminus, the 359-residue chain is UPF0284 protein MAE_56900 (359 aa).

This sequence belongs to the UPF0284 family.

This is UPF0284 protein MAE_56900 from Microcystis aeruginosa (strain NIES-843 / IAM M-2473).